We begin with the raw amino-acid sequence, 364 residues long: MVKFDTKLWKAVLMMSMINIGLSVVNVMFKKMIDEGLNRMVATTYRLAVGTLFLIPFAIFLERHNRPKLTGRILCSLFFSALLGTSLVQYFFLIGLEYTSSTFSLAFSNMVPSVTFALALVFRQETLNIKSNVGRAKLLGTMICICGALVLTLYKGTALSREHSTHMETHTRTDSTGAMTQKWAMGSIMLVISIIIWSSWFIVQAKISRVYPCQYTSTTILSFFGVIQSALLSLISERSTSMWVVKDKFQVLALLYSGIVGSGLCYVGMSWCLRQRGAVFTSSFIPLIQVFAAIFSFSFLHEQIYCGSVIGSMVIIVGLYILLWGKSKDKSASVTKQEPLDLDIEGCGTAPKELNSTAHQVSAK.

Transmembrane regions (helical) follow at residues 9–29 (WKAV…NVMF), 41–61 (VATT…AIFL), 76–96 (SLFF…LIGL), 102–122 (TFSL…ALVF), 138–158 (LLGT…KGTA), 183–203 (WAMG…WFIV), 215–235 (YTST…LSLI), 251–271 (VLAL…GMSW), 277–297 (GAVF…IFSF), and 304–324 (IYCG…ILLW). EamA domains follow at residues 26-152 (NVMF…LVLT) and 195-323 (IIWS…YILL).

The protein belongs to the drug/metabolite transporter (DMT) superfamily. Plant drug/metabolite exporter (P-DME) (TC 2.A.7.4) family.

Its subcellular location is the membrane. This is WAT1-related protein At3g30340 from Arabidopsis thaliana (Mouse-ear cress).